The following is a 304-amino-acid chain: Protein UL24 homolog (304 aa).

This sequence belongs to the HHV-1 UL24 protein family.

It localises to the host cytoplasm. Its subcellular location is the host nucleus. It is found in the host Golgi apparatus. Its function is as follows. May play a role in the dispersal of host nucleolin from the nucleolus throughout the nucleus leading to a decrease in ribosome biogenesis. In Gallid herpesvirus 2 (strain Chicken/Md5/ATCC VR-987) (GaHV-2), this protein is Protein UL24 homolog (MDV035).